Here is an 89-residue protein sequence, read N- to C-terminus: Small ribosomal subunit protein uS17 (89 aa).

Belongs to the universal ribosomal protein uS17 family. In terms of assembly, part of the 30S ribosomal subunit.

Functionally, one of the primary rRNA binding proteins, it binds specifically to the 5'-end of 16S ribosomal RNA. This Baumannia cicadellinicola subsp. Homalodisca coagulata protein is Small ribosomal subunit protein uS17.